A 183-amino-acid polypeptide reads, in one-letter code: Dual-action ribosomal maturation protein DarP (183 aa).

The segment at 1–23 is disordered; the sequence is MTKQPDDWLDEVPDNENDDDDDE. Positions 7–23 are enriched in acidic residues; it reads DWLDEVPDNENDDDDDE.

This sequence belongs to the DarP family.

It is found in the cytoplasm. Its function is as follows. Member of a network of 50S ribosomal subunit biogenesis factors which assembles along the 30S-50S interface, preventing incorrect 23S rRNA structures from forming. Promotes peptidyl transferase center (PTC) maturation. The protein is Dual-action ribosomal maturation protein DarP of Cronobacter sakazakii (strain ATCC BAA-894) (Enterobacter sakazakii).